A 198-amino-acid chain; its full sequence is Superoxide dismutase [Mn], mitochondrial (198 aa).

H26 contacts Mn(2+). At Y34 the chain carries 3'-nitrotyrosine. N6-acetyllysine; alternate is present on residues K44 and K51. Residues K44 and K51 each carry the N6-succinyllysine; alternate modification. H74 provides a ligand contact to Mn(2+). K90 carries the post-translational modification N6-acetyllysine. Residues K98 and K106 each carry the N6-acetyllysine; alternate modification. 2 positions are modified to N6-succinyllysine; alternate: K98 and K106. Mn(2+) is bound by residues D159 and H163. K178 bears the N6-acetyllysine mark.

Belongs to the iron/manganese superoxide dismutase family. As to quaternary structure, homotetramer. Requires Mn(2+) as cofactor. Nitrated under oxidative stress. Nitration coupled with oxidation inhibits the catalytic activity. In terms of processing, acetylation at Lys-98 decreases enzymatic activity. Deacetylated by SIRT3 upon exposure to ionizing radiations or after long fasting. Post-translationally, polyubiquitinated; leading to proteasomal degradation. Deubiquitinated by USP36 which increases protein stability.

Its subcellular location is the mitochondrion matrix. It carries out the reaction 2 superoxide + 2 H(+) = H2O2 + O2. Destroys superoxide anion radicals which are normally produced within the cells and which are toxic to biological systems. The sequence is that of Superoxide dismutase [Mn], mitochondrial (SOD2) from Macaca fuscata fuscata (Japanese macaque).